A 478-amino-acid chain; its full sequence is Aspartyl/glutamyl-tRNA(Asn/Gln) amidotransferase subunit B (478 aa).

This sequence belongs to the GatB/GatE family. GatB subfamily. In terms of assembly, heterotrimer of A, B and C subunits.

The catalysed reaction is L-glutamyl-tRNA(Gln) + L-glutamine + ATP + H2O = L-glutaminyl-tRNA(Gln) + L-glutamate + ADP + phosphate + H(+). The enzyme catalyses L-aspartyl-tRNA(Asn) + L-glutamine + ATP + H2O = L-asparaginyl-tRNA(Asn) + L-glutamate + ADP + phosphate + 2 H(+). Allows the formation of correctly charged Asn-tRNA(Asn) or Gln-tRNA(Gln) through the transamidation of misacylated Asp-tRNA(Asn) or Glu-tRNA(Gln) in organisms which lack either or both of asparaginyl-tRNA or glutaminyl-tRNA synthetases. The reaction takes place in the presence of glutamine and ATP through an activated phospho-Asp-tRNA(Asn) or phospho-Glu-tRNA(Gln). The sequence is that of Aspartyl/glutamyl-tRNA(Asn/Gln) amidotransferase subunit B from Syntrophotalea carbinolica (strain DSM 2380 / NBRC 103641 / GraBd1) (Pelobacter carbinolicus).